Reading from the N-terminus, the 147-residue chain is MSENFHILLLNGPNLNLLGTREPETYGHLTLNDIVQSLSADAQALNVKLTHFQSNAEHELINKIHAARGNVDYILINPAAFTHTSVALRDALLGVNIPFIEIHLSNVYSREPFRHHSYLSDIATGVICGLGAEGYRFALQAAVNRLS.

Catalysis depends on tyrosine 26, which acts as the Proton acceptor. Residues asparagine 77, histidine 83, and aspartate 90 each contribute to the substrate site. The active-site Proton donor is histidine 103. Residues 104-105 (LS) and arginine 114 each bind substrate.

The protein belongs to the type-II 3-dehydroquinase family. As to quaternary structure, homododecamer.

It carries out the reaction 3-dehydroquinate = 3-dehydroshikimate + H2O. The protein operates within metabolic intermediate biosynthesis; chorismate biosynthesis; chorismate from D-erythrose 4-phosphate and phosphoenolpyruvate: step 3/7. In terms of biological role, catalyzes a trans-dehydration via an enolate intermediate. This chain is 3-dehydroquinate dehydratase, found in Proteus mirabilis (strain HI4320).